The chain runs to 281 residues: Stomatin-4 (281 aa).

A helical membrane pass occupies residues 28-48; the sequence is WIITIISYLVVLFTLPLSAFF.

This sequence belongs to the band 7/mec-2 family.

The protein resides in the membrane. This is Stomatin-4 (sto-4) from Caenorhabditis elegans.